The chain runs to 243 residues: 3-deoxy-manno-octulosonate cytidylyltransferase (243 aa).

It belongs to the KdsB family.

The protein resides in the cytoplasm. It catalyses the reaction 3-deoxy-alpha-D-manno-oct-2-ulosonate + CTP = CMP-3-deoxy-beta-D-manno-octulosonate + diphosphate. It functions in the pathway nucleotide-sugar biosynthesis; CMP-3-deoxy-D-manno-octulosonate biosynthesis; CMP-3-deoxy-D-manno-octulosonate from 3-deoxy-D-manno-octulosonate and CTP: step 1/1. Its pathway is bacterial outer membrane biogenesis; lipopolysaccharide biosynthesis. Its function is as follows. Activates KDO (a required 8-carbon sugar) for incorporation into bacterial lipopolysaccharide in Gram-negative bacteria. In Helicobacter pylori (strain G27), this protein is 3-deoxy-manno-octulosonate cytidylyltransferase.